A 259-amino-acid chain; its full sequence is Enolase-phosphatase E1 (259 aa).

Mg(2+) is bound by residues D16 and E18. Substrate is bound by residues 151–152 (SS) and K185. D210 serves as a coordination point for Mg(2+).

This sequence belongs to the HAD-like hydrolase superfamily. MasA/MtnC family. As to quaternary structure, monomer. Requires Mg(2+) as cofactor.

The protein localises to the cytoplasm. It localises to the nucleus. It carries out the reaction 5-methylsulfanyl-2,3-dioxopentyl phosphate + H2O = 1,2-dihydroxy-5-(methylsulfanyl)pent-1-en-3-one + phosphate. It functions in the pathway amino-acid biosynthesis; L-methionine biosynthesis via salvage pathway; L-methionine from S-methyl-5-thio-alpha-D-ribose 1-phosphate: step 3/6. Its pathway is amino-acid biosynthesis; L-methionine biosynthesis via salvage pathway; L-methionine from S-methyl-5-thio-alpha-D-ribose 1-phosphate: step 4/6. Bifunctional enzyme that catalyzes the enolization of 2,3-diketo-5-methylthiopentyl-1-phosphate (DK-MTP-1-P) into the intermediate 2-hydroxy-3-keto-5-methylthiopentenyl-1-phosphate (HK-MTPenyl-1-P), which is then dephosphorylated to form the acireductone 1,2-dihydroxy-3-keto-5-methylthiopentene (DHK-MTPene). This chain is Enolase-phosphatase E1 (enoph1), found in Xenopus tropicalis (Western clawed frog).